A 193-amino-acid chain; its full sequence is Xanthine phosphoribosyltransferase (193 aa).

2 residues coordinate xanthine: Leu-20 and Thr-27. Residue 128-132 participates in 5-phospho-alpha-D-ribose 1-diphosphate binding; it reads ANGQA. Residue Lys-156 participates in xanthine binding.

Belongs to the purine/pyrimidine phosphoribosyltransferase family. Xpt subfamily. Homodimer.

The protein resides in the cytoplasm. It catalyses the reaction XMP + diphosphate = xanthine + 5-phospho-alpha-D-ribose 1-diphosphate. Its pathway is purine metabolism; XMP biosynthesis via salvage pathway; XMP from xanthine: step 1/1. Converts the preformed base xanthine, a product of nucleic acid breakdown, to xanthosine 5'-monophosphate (XMP), so it can be reused for RNA or DNA synthesis. The polypeptide is Xanthine phosphoribosyltransferase (Streptococcus equi subsp. zooepidemicus (strain H70)).